A 483-amino-acid chain; its full sequence is UDP-N-acetylmuramoyl-L-alanyl-D-glutamate--2,6-diaminopimelate ligase (483 aa).

Serine 30 is a UDP-N-acetyl-alpha-D-muramoyl-L-alanyl-D-glutamate binding site. 109 to 115 (GTNGKTT) is a binding site for ATP. UDP-N-acetyl-alpha-D-muramoyl-L-alanyl-D-glutamate-binding positions include 151–152 (TT), serine 178, and arginine 186. Lysine 218 bears the N6-carboxylysine mark. Meso-2,6-diaminopimelate contacts are provided by residues arginine 380, 403–406 (DNPR), glycine 453, and glutamate 457. Positions 403–406 (DNPR) match the Meso-diaminopimelate recognition motif motif.

It belongs to the MurCDEF family. MurE subfamily. It depends on Mg(2+) as a cofactor. Carboxylation is probably crucial for Mg(2+) binding and, consequently, for the gamma-phosphate positioning of ATP.

Its subcellular location is the cytoplasm. It catalyses the reaction UDP-N-acetyl-alpha-D-muramoyl-L-alanyl-D-glutamate + meso-2,6-diaminopimelate + ATP = UDP-N-acetyl-alpha-D-muramoyl-L-alanyl-gamma-D-glutamyl-meso-2,6-diaminopimelate + ADP + phosphate + H(+). Its pathway is cell wall biogenesis; peptidoglycan biosynthesis. In terms of biological role, catalyzes the addition of meso-diaminopimelic acid to the nucleotide precursor UDP-N-acetylmuramoyl-L-alanyl-D-glutamate (UMAG) in the biosynthesis of bacterial cell-wall peptidoglycan. The protein is UDP-N-acetylmuramoyl-L-alanyl-D-glutamate--2,6-diaminopimelate ligase of Chlamydia abortus (strain DSM 27085 / S26/3) (Chlamydophila abortus).